We begin with the raw amino-acid sequence, 473 residues long: Photosystem II CP43 reaction center protein (473 aa).

The propeptide occupies 1 to 14 (MKTLYSLRRFYPVE). Thr15 carries the post-translational modification N-acetylthreonine. Thr15 bears the Phosphothreonine mark. The next 5 helical transmembrane spans lie at 69-93 (LFEV…PHLA), 134-155 (LLGP…KDRN), 178-200 (KALY…RKIT), 255-275 (KPFA…LSYS), and 291-312 (WFNN…ASQA). A [CaMn4O5] cluster-binding site is contributed by Glu367. A helical membrane pass occupies residues 447-471 (RARAAAAGFEKGIDRDFEPVLSMTP).

Belongs to the PsbB/PsbC family. PsbC subfamily. PSII is composed of 1 copy each of membrane proteins PsbA, PsbB, PsbC, PsbD, PsbE, PsbF, PsbH, PsbI, PsbJ, PsbK, PsbL, PsbM, PsbT, PsbX, PsbY, PsbZ, Psb30/Ycf12, at least 3 peripheral proteins of the oxygen-evolving complex and a large number of cofactors. It forms dimeric complexes. Requires Binds multiple chlorophylls and provides some of the ligands for the Ca-4Mn-5O cluster of the oxygen-evolving complex. It may also provide a ligand for a Cl- that is required for oxygen evolution. PSII binds additional chlorophylls, carotenoids and specific lipids. as cofactor.

The protein localises to the plastid. Its subcellular location is the chloroplast thylakoid membrane. In terms of biological role, one of the components of the core complex of photosystem II (PSII). It binds chlorophyll and helps catalyze the primary light-induced photochemical processes of PSII. PSII is a light-driven water:plastoquinone oxidoreductase, using light energy to abstract electrons from H(2)O, generating O(2) and a proton gradient subsequently used for ATP formation. The protein is Photosystem II CP43 reaction center protein of Gossypium hirsutum (Upland cotton).